The following is a 79-amino-acid chain: Methionine-rich peptide X (79 aa).

A signal peptide spans 1–22 (MKKLAAVMLTSCLMVAVGASFA). The interval 37–79 (KKDDMAKDEMKKDSMAKDGMKKDAMKKDAMMKKDGMTKDEMKK) is disordered.

Protein is oxidized (possibly on Met residues) when cells are exposed to chlorite or hypochlorite; initially the protein is highly oxidized, by 50 minutes all protein is in the reduced form.

The protein localises to the periplasm. Its function is as follows. Serves as an oxidative stress sink, specifically for chlorite and hypochlorite. The protein is Methionine-rich peptide X of Azospira oryzae (strain ATCC BAA-33 / DSM 13638 / PS) (Dechlorosoma suillum).